Here is a 185-residue protein sequence, read N- to C-terminus: Ribosome-recycling factor (185 aa).

Belongs to the RRF family.

It is found in the cytoplasm. Functionally, responsible for the release of ribosomes from messenger RNA at the termination of protein biosynthesis. May increase the efficiency of translation by recycling ribosomes from one round of translation to another. In Listeria monocytogenes serotype 4a (strain HCC23), this protein is Ribosome-recycling factor.